A 225-amino-acid chain; its full sequence is MNGARIAFWPKKEQHQLFNLSFSAMMLALALIASFVSHFISIPFLSALKLTIDISSVFLIACAFFVSYSWALVITVALSLCSFIWDGNNWIGILTLTIANFAIVSFTRLYFHIFAQIKLRWLWVFSLATLSNTLLLTTLNGLLITPLYWYWFGYVPTANFVEVAKIYNKTPYFHFFLFGVPNYWGGIFALYSLFNVIKFTLVSLIGVPVMRAFQKFYWKKAQIVY.

6 helical membrane passes run 25-45 (MMLA…IPFL), 57-77 (VFLI…ITVA), 83-103 (FIWD…NFAI), 109-129 (LYFH…SLAT), 135-155 (LLTT…FGYV), and 187-207 (IFAL…LIGV).

It localises to the cell membrane. This is an uncharacterized protein from Mycoplasma pneumoniae (strain ATCC 29342 / M129 / Subtype 1) (Mycoplasmoides pneumoniae).